The primary structure comprises 611 residues: Methionine--tRNA ligase (611 aa).

Residues 12 to 22 (PYANGPRHIGH) carry the 'HIGH' region motif. Residues C144, C147, C157, and C160 each contribute to the Zn(2+) site. Residues 348-352 (KFSSS) carry the 'KMSKS' region motif. S351 serves as a coordination point for ATP.

The protein belongs to the class-I aminoacyl-tRNA synthetase family. MetG type 1 subfamily. In terms of assembly, monomer. It depends on Zn(2+) as a cofactor.

It is found in the cytoplasm. It catalyses the reaction tRNA(Met) + L-methionine + ATP = L-methionyl-tRNA(Met) + AMP + diphosphate. Its function is as follows. Is required not only for elongation of protein synthesis but also for the initiation of all mRNA translation through initiator tRNA(fMet) aminoacylation. This Corynebacterium urealyticum (strain ATCC 43042 / DSM 7109) protein is Methionine--tRNA ligase.